The chain runs to 448 residues: Probable glycine dehydrogenase (decarboxylating) subunit 1 (448 aa).

Belongs to the GcvP family. N-terminal subunit subfamily. In terms of assembly, the glycine cleavage system is composed of four proteins: P, T, L and H. In this organism, the P 'protein' is a heterodimer of two subunits.

The catalysed reaction is N(6)-[(R)-lipoyl]-L-lysyl-[glycine-cleavage complex H protein] + glycine + H(+) = N(6)-[(R)-S(8)-aminomethyldihydrolipoyl]-L-lysyl-[glycine-cleavage complex H protein] + CO2. The glycine cleavage system catalyzes the degradation of glycine. The P protein binds the alpha-amino group of glycine through its pyridoxal phosphate cofactor; CO(2) is released and the remaining methylamine moiety is then transferred to the lipoamide cofactor of the H protein. The protein is Probable glycine dehydrogenase (decarboxylating) subunit 1 of Pyrococcus furiosus (strain ATCC 43587 / DSM 3638 / JCM 8422 / Vc1).